Reading from the N-terminus, the 935-residue chain is MARWGAARMAACGPWGRNRRVGAGDAFEASEVRRDGRSRMMPACGPWGAGHGGGDPALERELSRDGSHYSISSAILPSLGARSNRRIKLRRFIISPYDRRYRIWETFLIVLVVYSAWVSPFEFGFIPKPTGALATADNVVNAFFAVDIILTFFVAYLDKMSYMLEDDPKKIAWRYSTTWLVLDVASTIPSEFARRILPSKLRSYGFFNMLRLWRLRRVSSLFSRLEKDRHFNYFWVRCAKLICVTLFAVHCAACFYYLLADRYPVPTSTWIGNYMADFHERSLWIRYVTSVYWSITTLTTVGYGDLHAENTREMIFNIFYMLFNLGLTAYLIGNMTNLVVHGTSRTRNYRDTIQAATSFGVRNQLPPRLQDQMISHISLKYRTDSEGLQQQEILDSLPKAIKSSISQYLFFHLVQNVYLFQGVSNDLIFQLVSEMKAEYFPPREDVILQNEAPTDFYILVSGSVELVEQQNGADQVIQVATSGEVVGEIGVLCYRPQLFTVRTRSLCQLLRLNRTAFLSIVQSNVGDGTIIMNNLIQFLKEQKENSVMAGVVKEIESMLARGNLDLPITLCFAVTRGDDFLLHQLLKRGMDPNESDNDGHTALHIAASKGNEQCVRLLLEYGADPNARDSEGKVPLWEALCEKHAAVVQLLVEGGADLSSGDTGLYACIAVEESDTELLNDIIHYGGDVNRARRDGTTALHRAVCDGNVQMAELLLEHGADIDKQDGNGWTPRALAEQQGHDDIQLLFRSRKAATASGHHHVPSSTTTRVAPAAAAASLIGRFNSEPMMKNMIHEDADLPSRVLPEKLRRKRVTFQNSLFGVISSSQAQRETDHPLSRGGLAATGSPNPSSGSRNAVIRVTISCPEKGNTAGKLVLLPQTLDMLLELGAKKFDFAPTKVLTVEGAEVDEVELIRDGDHLVLVSDEWDAEKMKGKS.

Residues 1–106 (MARWGAARMA…YDRRYRIWET (106 aa)) are Cytoplasmic-facing. Residues 107 to 127 (FLIVLVVYSAWVSPFEFGFIP) form a helical membrane-spanning segment. Over 128–136 (KPTGALATA) the chain is Extracellular. The chain crosses the membrane as a helical span at residues 137 to 157 (DNVVNAFFAVDIILTFFVAYL). The Cytoplasmic portion of the chain corresponds to 158 to 178 (DKMSYMLEDDPKKIAWRYSTT). The chain crosses the membrane as a helical span at residues 179–199 (WLVLDVASTIPSEFARRILPS). Topologically, residues 200 to 205 (KLRSYG) are extracellular. The helical; Voltage-sensor transmembrane segment at 206–226 (FFNMLRLWRLRRVSSLFSRLE) threads the bilayer. The Cytoplasmic portion of the chain corresponds to 227-240 (KDRHFNYFWVRCAK). A helical membrane pass occupies residues 241 to 261 (LICVTLFAVHCAACFYYLLAD). Residues 262-288 (RYPVPTSTWIGNYMADFHERSLWIRYV) lie on the Extracellular side of the membrane. Residues 289–308 (TSVYWSITTLTTVGYGDLHA) constitute an intramembrane region (pore-forming). The Extracellular portion of the chain corresponds to 309–312 (ENTR). The chain crosses the membrane as a helical span at residues 313–333 (EMIFNIFYMLFNLGLTAYLIG). At 334–935 (NMTNLVVHGT…WDAEKMKGKS (602 aa)) the chain is on the cytoplasmic side. 419–538 (LFQGVSNDLI…TIIMNNLIQF (120 aa)) is a binding site for a nucleoside 3',5'-cyclic phosphate. 6 ANK repeats span residues 565–594 (DLPI…DPNE), 598–627 (DGHT…DPNA), 631–660 (EGKV…DLSS), 662–691 (DTGL…DVNR), 695–724 (DGTT…DIDK), and 728–757 (NGWT…ATAS). The disordered stretch occupies residues 826–854 (SQAQRETDHPLSRGGLAATGSPNPSSGSR). Positions 845–854 (GSPNPSSGSR) are enriched in polar residues. The KHA domain occupies 859–935 (RVTISCPEKG…WDAEKMKGKS (77 aa)).

It belongs to the potassium channel family. Plant (TC 1.A.1.4) subfamily. In terms of assembly, the potassium channel is probably a homo- or heterotetrameric complex of pore-forming subunits. In terms of tissue distribution, highly expressed in the epidermis and endodermis of roots, and at lower level in cells of the vasculature and the cortex. Expressed in xylem parenchyma, phloem and mesophyll cells of leaves.

It localises to the membrane. In terms of biological role, highly selective inward-rectifying potassium channel that mediates potassium uptake by plant roots. The chain is Potassium channel AKT1 (AKT1) from Oryza sativa subsp. indica (Rice).